The chain runs to 393 residues: MTQIGTPLSPTATRVLFCGSGELGKEVVIELQRLGVEVIAVDRYENAPAMQVAHRSHVINMLDGAALRAVIEAEKPHFIVPEIEAIATATLVELEAEGFTVIPTARAAQLTMNREGIRRLAAEELKLPTSPYHFADTFEAYSKAVEDLGFPCVVKPVMSSSGKGQSLLKSTDDVQKAWDYAQEGGRAGKGRVIVEGFIDFDYEITLLTVRHIGGTTFCAPVGHRQEKGDYQESWQPQAMSPVALAESERVAKAVTEALGGRGMFGVELFIKGDQVWFSEVSPRPHDTGLVTLISQDLSQFALHARAILGLPIPLIRQFGPSASAVILVEGQSTQTAFANLGAALAEPDTALRLFGKPEVNGQRRMGVALARDESIEAARAKATRASQAVNVEL.

Residues 22–23 (EL) and Glu82 contribute to the N(1)-(5-phospho-beta-D-ribosyl)glycinamide site. Residues Arg114, Lys155, 160 to 165 (SSGKGQ), 195 to 198 (EGFI), and Glu203 each bind ATP. The ATP-grasp domain occupies 119 to 308 (RLAAEELKLP…QFALHARAIL (190 aa)). Glu267 and Glu279 together coordinate Mg(2+). Residues Asp286, Lys356, and 363–364 (RR) each bind N(1)-(5-phospho-beta-D-ribosyl)glycinamide.

It belongs to the PurK/PurT family. Homodimer.

The catalysed reaction is N(1)-(5-phospho-beta-D-ribosyl)glycinamide + formate + ATP = N(2)-formyl-N(1)-(5-phospho-beta-D-ribosyl)glycinamide + ADP + phosphate + H(+). The protein operates within purine metabolism; IMP biosynthesis via de novo pathway; N(2)-formyl-N(1)-(5-phospho-D-ribosyl)glycinamide from N(1)-(5-phospho-D-ribosyl)glycinamide (formate route): step 1/1. Functionally, involved in the de novo purine biosynthesis. Catalyzes the transfer of formate to 5-phospho-ribosyl-glycinamide (GAR), producing 5-phospho-ribosyl-N-formylglycinamide (FGAR). Formate is provided by PurU via hydrolysis of 10-formyl-tetrahydrofolate. The chain is Formate-dependent phosphoribosylglycinamide formyltransferase from Pseudomonas syringae pv. syringae (strain B728a).